The primary structure comprises 505 residues: Lysine--tRNA ligase (505 aa).

Residues Glu415 and Glu422 each contribute to the Mg(2+) site.

The protein belongs to the class-II aminoacyl-tRNA synthetase family. As to quaternary structure, homodimer. The cofactor is Mg(2+).

The protein resides in the cytoplasm. The enzyme catalyses tRNA(Lys) + L-lysine + ATP = L-lysyl-tRNA(Lys) + AMP + diphosphate. This Xanthomonas oryzae pv. oryzae (strain MAFF 311018) protein is Lysine--tRNA ligase.